The sequence spans 55 residues: Large ribosomal subunit protein bL33 (55 aa).

This sequence belongs to the bacterial ribosomal protein bL33 family.

The chain is Large ribosomal subunit protein bL33 from Acidiphilium cryptum (strain JF-5).